Here is a 346-residue protein sequence, read N- to C-terminus: Uroporphyrinogen decarboxylase (346 aa).

Residues 21–25 (RQAGR), D71, Y146, S201, and H316 contribute to the substrate site.

This sequence belongs to the uroporphyrinogen decarboxylase family. Homodimer.

The protein resides in the cytoplasm. The catalysed reaction is uroporphyrinogen III + 4 H(+) = coproporphyrinogen III + 4 CO2. Its pathway is porphyrin-containing compound metabolism; protoporphyrin-IX biosynthesis; coproporphyrinogen-III from 5-aminolevulinate: step 4/4. Its function is as follows. Catalyzes the decarboxylation of four acetate groups of uroporphyrinogen-III to yield coproporphyrinogen-III. This is Uroporphyrinogen decarboxylase from Rickettsia massiliae (strain Mtu5).